Reading from the N-terminus, the 405-residue chain is MKLLGHKIELWAGLLLPDVSISGMSELRFPEEKPLLRGQDTEMESADTFLSAADTDWKEHDIETPYGMLHVVIRGTPKGNRPAILTYHDVGLNHKLCFNTFFNYEDMQEITKHFVVCHVDAPGQQVGASQFPQGYQYPTMEQLAAMLPSVMQHFGFQSIIGIGVGAGAYVLAKFALIFPELVEGMVLVNIDPNGKGWIDWAASKLSGLTSSLPETVLSHLFSQEELMNNTELVQNYRQQISSCVNQSNLQLFWNMYNSRRDLEMSRPGTVPNAKTLRAPVMLVVGDNAPAEDCVVECNSKLDPTNTTFLKMADSGGLPQVTQPGKLTEAFKYFLQGMGYIASLKDRRQSASAGAVPSASMTRLARSRTASLTSASSVDGARPRPCTQSESSDGIGQINHTMEVSC.

The interval 352–405 is disordered; it reads AGAVPSASMTRLARSRTASLTSASSVDGARPRPCTQSESSDGIGQINHTMEVSC. A compositionally biased stretch (low complexity) spans 361–376; sequence TRLARSRTASLTSASS. Residues 385–405 are compositionally biased toward polar residues; sequence CTQSESSDGIGQINHTMEVSC.

The protein belongs to the NDRG family.

Its subcellular location is the cytoplasm. The protein localises to the cytosol. In terms of biological role, contributes to the maintenance of intracerebral BDNF levels within the normal range. May enhance growth factor-induced ERK1 and ERK2 phosphorylation. May attenuate growth factor-promoted ELK1 phosphorylation in a microtubule-dependent manner. This is Protein NDRG4 from Xenopus tropicalis (Western clawed frog).